We begin with the raw amino-acid sequence, 491 residues long: Ketol-acid reductoisomerase (NADP(+)) (491 aa).

The 194-residue stretch at 15 to 208 (AQLGKCRFMG…GGHRAGVLES (194 aa)) folds into the KARI N-terminal Rossmann domain. NADP(+) is bound by residues 45-48 (CGAQ), R68, R76, S78, and 108-110 (DKQ). Residue H132 is part of the active site. G158 provides a ligand contact to NADP(+). KARI C-terminal knotted domains are found at residues 209 to 344 (SFVA…TAPQ) and 345 to 484 (FEGK…MTDM). 4 residues coordinate Mg(2+): D217, E221, E389, and E393. S414 lines the substrate pocket.

It belongs to the ketol-acid reductoisomerase family. It depends on Mg(2+) as a cofactor.

It catalyses the reaction (2R)-2,3-dihydroxy-3-methylbutanoate + NADP(+) = (2S)-2-acetolactate + NADPH + H(+). It carries out the reaction (2R,3R)-2,3-dihydroxy-3-methylpentanoate + NADP(+) = (S)-2-ethyl-2-hydroxy-3-oxobutanoate + NADPH + H(+). It functions in the pathway amino-acid biosynthesis; L-isoleucine biosynthesis; L-isoleucine from 2-oxobutanoate: step 2/4. Its pathway is amino-acid biosynthesis; L-valine biosynthesis; L-valine from pyruvate: step 2/4. Involved in the biosynthesis of branched-chain amino acids (BCAA). Catalyzes an alkyl-migration followed by a ketol-acid reduction of (S)-2-acetolactate (S2AL) to yield (R)-2,3-dihydroxy-isovalerate. In the isomerase reaction, S2AL is rearranged via a Mg-dependent methyl migration to produce 3-hydroxy-3-methyl-2-ketobutyrate (HMKB). In the reductase reaction, this 2-ketoacid undergoes a metal-dependent reduction by NADPH to yield (R)-2,3-dihydroxy-isovalerate. This is Ketol-acid reductoisomerase (NADP(+)) from Salmonella choleraesuis (strain SC-B67).